The following is a 209-amino-acid chain: Cytidylate kinase (209 aa).

9–17 (GPAAAGKGT) is an ATP binding site.

It belongs to the cytidylate kinase family. Type 1 subfamily.

The protein localises to the cytoplasm. The catalysed reaction is CMP + ATP = CDP + ADP. It carries out the reaction dCMP + ATP = dCDP + ADP. The protein is Cytidylate kinase of Granulibacter bethesdensis (strain ATCC BAA-1260 / CGDNIH1).